Here is a 247-residue protein sequence, read N- to C-terminus: NAD(P)H-quinone oxidoreductase subunit K (247 aa).

[4Fe-4S] cluster contacts are provided by Cys-63, Cys-64, Cys-128, and Cys-159.

This sequence belongs to the complex I 20 kDa subunit family. In terms of assembly, NDH-1 can be composed of about 15 different subunits; different subcomplexes with different compositions have been identified which probably have different functions. Requires [4Fe-4S] cluster as cofactor.

It is found in the cellular thylakoid membrane. It catalyses the reaction a plastoquinone + NADH + (n+1) H(+)(in) = a plastoquinol + NAD(+) + n H(+)(out). The enzyme catalyses a plastoquinone + NADPH + (n+1) H(+)(in) = a plastoquinol + NADP(+) + n H(+)(out). Functionally, NDH-1 shuttles electrons from an unknown electron donor, via FMN and iron-sulfur (Fe-S) centers, to quinones in the respiratory and/or the photosynthetic chain. The immediate electron acceptor for the enzyme in this species is believed to be plastoquinone. Couples the redox reaction to proton translocation, and thus conserves the redox energy in a proton gradient. Cyanobacterial NDH-1 also plays a role in inorganic carbon-concentration. The sequence is that of NAD(P)H-quinone oxidoreductase subunit K from Gloeothece citriformis (strain PCC 7424) (Cyanothece sp. (strain PCC 7424)).